A 99-amino-acid chain; its full sequence is NADH dehydrogenase [ubiquinone] 1 alpha subcomplex subunit 2 (99 aa).

Ala2 bears the N-acetylalanine mark. A disulfide bond links Cys24 and Cys58. The residue at position 64 (Lys64) is an N6-acetyllysine; alternate. Lys64 carries the N6-succinyllysine; alternate modification. At Lys75 the chain carries N6-acetyllysine.

This sequence belongs to the complex I NDUFA2 subunit family. As to quaternary structure, complex I is composed of 45 different subunits. Post-translationally, acetylation of Lys-64 and Lys-75 is observed in liver mitochondria from fasted mice but not from fed mice.

The protein resides in the mitochondrion inner membrane. Functionally, accessory subunit of the mitochondrial membrane respiratory chain NADH dehydrogenase (Complex I), that is believed not to be involved in catalysis. Complex I functions in the transfer of electrons from NADH to the respiratory chain. The immediate electron acceptor for the enzyme is believed to be ubiquinone. The sequence is that of NADH dehydrogenase [ubiquinone] 1 alpha subcomplex subunit 2 (Ndufa2) from Mus musculus (Mouse).